Reading from the N-terminus, the 250-residue chain is ATP synthase subunit a (250 aa).

5 consecutive transmembrane segments (helical) span residues Thr27–Leu47, Ile83–Trp103, Ile129–Trp149, Ile191–Ala211, and Phe219–Phe239.

The protein belongs to the ATPase A chain family. In terms of assembly, F-type ATPases have 2 components, CF(1) - the catalytic core - and CF(0) - the membrane proton channel. CF(1) has five subunits: alpha(3), beta(3), gamma(1), delta(1), epsilon(1). CF(0) has three main subunits: a(1), b(2) and c(9-12). The alpha and beta chains form an alternating ring which encloses part of the gamma chain. CF(1) is attached to CF(0) by a central stalk formed by the gamma and epsilon chains, while a peripheral stalk is formed by the delta and b chains.

It localises to the cell membrane. Key component of the proton channel; it plays a direct role in the translocation of protons across the membrane. This chain is ATP synthase subunit a, found in Mycobacterium ulcerans (strain Agy99).